The chain runs to 754 residues: Relaxin receptor 2 (754 aa).

The Extracellular portion of the chain corresponds to 1–416 (MIVFLVFKHL…SSFEDLLANN (416 aa)). The LDL-receptor class A domain maps to 44-81 (SCQKGYFPCGNLTKCLPRAFHCDGKDDCGNGADEENCG). 3 disulfide bridges follow: Cys45/Cys58, Cys52/Cys71, and Cys65/Cys80. Asn54 is a glycosylation site (N-linked (GlcNAc...) asparagine). N-linked (GlcNAc...) asparagine glycosylation is present at Asn138. 10 LRR repeats span residues 138–159 (NVTL…VFIK), 162–183 (KLKK…AFFG), 186–207 (NLQI…IFKD), 210–231 (QLTW…LFTG), 234–255 (SLFF…MCAQ), 258–279 (QLNW…TFLS), 282–303 (SLTV…TFSS), 306–327 (NLGE…LFKD), 330–351 (LLQK…QFES), and 354–375 (QLQS…MFQP). The N-linked (GlcNAc...) asparagine glycan is linked to Asn274. A glycan (N-linked (GlcNAc...) asparagine) is linked at Asn335. Asn378 carries N-linked (GlcNAc...) asparagine glycosylation. A helical membrane pass occupies residues 417–437 (ILRIFVWVIAFITCFGNLFVI). The Cytoplasmic segment spans residues 438-455 (GMRSFIKAENTTHAMSIK). Residues 456–476 (ILCCADCLMGVYLFFVGIFDI) form a helical membrane-spanning segment. Topologically, residues 477–495 (KYRGQYQKYALLWMESVQC) are extracellular. Residues Cys495 and Cys573 are joined by a disulfide bond. The helical transmembrane segment at 496-518 (RLMGFLAMLSTEVSVLLLTYLTL) threads the bilayer. The Cytoplasmic segment spans residues 519–537 (EKFLVIVFPFSNIRPGKRQ). Residues 538-558 (TSVILICIWMAGFLIAVIPFW) traverse the membrane as a helical segment. Over 559–592 (NKDYFGNFYGKNGVCFPLYYDQTEDIGSKGYSLG) the chain is Extracellular. Residues 593 to 613 (IFLGVNLLAFLIIVFSYITMF) form a helical membrane-spanning segment. At 614–639 (CSIQKTALQTTEVRNCFGREVAVANR) the chain is on the cytoplasmic side. A helical transmembrane segment spans residues 640 to 660 (FFFIVFSDAICWIPVFVVKIL). Residues 661–670 (SLFRVEIPDT) lie on the Extracellular side of the membrane. The helical transmembrane segment at 671–691 (MTSWIVIFFLPVNSALNPILY) threads the bilayer. Residues 692 to 754 (TLTTNFFKDK…LGDSIMKPVS (63 aa)) lie on the Cytoplasmic side of the membrane.

Belongs to the G-protein coupled receptor 1 family. As to expression, expressed mainly in the brain, kidney, muscle, testis, thyroid, uterus, peripheral blood cells and bone marrow.

It localises to the cell membrane. In terms of biological role, receptor for relaxin. The activity of this receptor is mediated by G proteins leading to stimulation of adenylate cyclase and an increase of cAMP. May also be a receptor for Leydig insulin-like peptide (INSL3). The protein is Relaxin receptor 2 (RXFP2) of Homo sapiens (Human).